The chain runs to 1049 residues: Tegument protein pp150 (1049 aa).

2 disordered regions span residues 397–549 and 659–945; these read EERQ…DPRF and PFRM…YPAV. Over residues 428–439 the composition is skewed to acidic residues; sequence ADEDDDDDDDDE. Gly residues predominate over residues 452 to 462; sequence SGKGAASGGGV. Over residues 463–474 the composition is skewed to low complexity; that stretch reads SSIFSGLLSSGS. Positions 475-490 are enriched in polar residues; sequence QKPTSGPLNIPQQQQR. Positions 509–525 are enriched in basic and acidic residues; the sequence is VRRDSAWDVRPLTETRG. A compositionally biased stretch (low complexity) spans 672–688; sequence TVSTTPRRPSTPRAAVT. The span at 710–722 shows a compositional bias: acidic residues; that stretch reads PVEDSEEEDDDSS. Residues 731-743 show a composition bias toward polar residues; it reads GHTTPSSDYNNDV. Over residues 745 to 757 the composition is skewed to low complexity; it reads SPPSQTPEQSTPS. Composition is skewed to polar residues over residues 766 to 776, 791 to 800, and 808 to 835; these read SPMTTTSTSQK, RAQTVTSTPV, and VSGT…SRNV. 4 stretches are compositionally biased toward low complexity: residues 836 to 855, 866 to 884, 912 to 928, and 936 to 945; these read TSGA…ASAS, SPAT…SPAK, VVGR…APGR, and ASTTPTYPAV. A glycan (O-linked (GlcNAc) serine; by host) is linked at S922. S953 carries an O-linked (GlcNAc) serine; by host glycan. Positions 1006-1032 are disordered; it reads DLSSPQKSGTGPQPGSAGMGGAKTPSD. Residues 1008–1018 show a composition bias toward polar residues; the sequence is SSPQKSGTGPQ.

It belongs to the herpesviridae large structural phosphoprotein family. As to quaternary structure, interacts with host BICD1 and RAB6A. Interacts with small capsid protein UL48A; this interaction links together the capsid and pp150. Interacts with host CCNA2. In terms of processing, phosphorylated by host CCNA2.

The protein localises to the virion tegument. It is found in the host cytoplasm. The protein resides in the host nucleus. Functionally, participates in the last steps of viral maturation and release. Associates with nuclear capsids prior to DNA encapsidation and later preserves the integrity of nucleocapsids through secondary envelopment at the assembly compartment. Interacts with host CCNA2 and thereby blocks the onset of lytic gene expression to promote establishment of a quiescent state of infection in undifferentiated cells. This Homo sapiens (Human) protein is Tegument protein pp150 (UL32).